The primary structure comprises 586 residues: Succinate dehydrogenase flavoprotein subunit (586 aa).

Residues 10–15 and 33–48 contribute to the FAD site; these read GGGLAG and SIVP…AQGG. Histidine 41 bears the Tele-8alpha-FAD histidine mark. Positions 236 and 250 each coordinate substrate. Arginine 285 serves as the catalytic Proton acceptor. Histidine 352 is a substrate binding site. Glutamate 376 is a binding site for FAD. Arginine 386 serves as a coordination point for substrate. 391 to 392 serves as a coordination point for FAD; that stretch reads SL.

It belongs to the FAD-dependent oxidoreductase 2 family. FRD/SDH subfamily. In terms of assembly, in B.subtilis succinate dehydrogenase forms part of an enzyme complex containing three subunits: a flavoprotein, an iron-sulfur protein and cytochrome b-558. Interacts with FloT. The cofactor is FAD.

It is found in the cell membrane. Its subcellular location is the membrane raft. The catalysed reaction is a quinone + succinate = fumarate + a quinol. The protein operates within carbohydrate metabolism; tricarboxylic acid cycle; fumarate from succinate (bacterial route): step 1/1. The sequence is that of Succinate dehydrogenase flavoprotein subunit (sdhA) from Bacillus subtilis (strain 168).